Here is a 352-residue protein sequence, read N- to C-terminus: 3'(2'),5'-bisphosphate nucleotidase (352 aa).

Asp45 (proton acceptor) is an active-site residue. The Mg(2+) site is built by Glu68, Asp133, Ile135, and Asp136. Thr138 (proton acceptor) is an active-site residue. Thr138, His240, Ser264, Lys267, Arg281, and Asp294 together coordinate adenosine 3',5'-bisphosphate. AMP-binding residues include His240, Ser264, Lys267, Arg281, and Asp294. Asp294 is a binding site for Mg(2+).

The protein belongs to the inositol monophosphatase superfamily. Mg(2+) is required as a cofactor.

The enzyme catalyses 3'-phosphoadenylyl sulfate + H2O = adenosine 5'-phosphosulfate + phosphate. It carries out the reaction adenosine 3',5'-bisphosphate + H2O = AMP + phosphate. It catalyses the reaction adenosine 2',5'-bisphosphate + H2O = AMP + phosphate. Phosphatase that converts adenosine 3'-phosphate 5'-phosphosulfate (PAPS) to adenosine 5'-phosphosulfate (APS) and 3'(2')-phosphoadenosine 5'-phosphate (PAP) to AMP. May regulate the flux of sulfur in the sulfur-activation pathway by converting PAPS to APS. Involved in osmoadaptation. This Emericella nidulans (strain FGSC A4 / ATCC 38163 / CBS 112.46 / NRRL 194 / M139) (Aspergillus nidulans) protein is 3'(2'),5'-bisphosphate nucleotidase.